Here is a 390-residue protein sequence, read N- to C-terminus: Chorismate synthase 1 (390 aa).

NADP(+) contacts are provided by Arg-39 and Arg-45. A disordered region spans residues 95–117; sequence EQEEKEMKRKVTKPRPGHADLNG. Residues 132–134, 253–254, Gly-298, 313–317, and Arg-339 contribute to the FMN site; these read RSS, NA, and KPIPT.

Belongs to the chorismate synthase family. As to quaternary structure, homotetramer. Requires FMNH2 as cofactor.

The enzyme catalyses 5-O-(1-carboxyvinyl)-3-phosphoshikimate = chorismate + phosphate. It functions in the pathway metabolic intermediate biosynthesis; chorismate biosynthesis; chorismate from D-erythrose 4-phosphate and phosphoenolpyruvate: step 7/7. Catalyzes the anti-1,4-elimination of the C-3 phosphate and the C-6 proR hydrogen from 5-enolpyruvylshikimate-3-phosphate (EPSP) to yield chorismate, which is the branch point compound that serves as the starting substrate for the three terminal pathways of aromatic amino acid biosynthesis. This reaction introduces a second double bond into the aromatic ring system. In Bacillus cereus (strain ATCC 10987 / NRS 248), this protein is Chorismate synthase 1.